The sequence spans 125 residues: MPTINQLVRKSRKTVKAQSDSPALKNCPQRRGVCTVVKTTTPKKPNSALRKIARVRLTNGYEVSAYIPGVGHNLQEHSVVLIRGGRVKDLPGVRYHIVRGALDSAGVATRMQSRSKYGAKKPKQK.

Positions 1 to 26 (MPTINQLVRKSRKTVKAQSDSPALKN) are disordered. 3-methylthioaspartic acid is present on D89.

The protein belongs to the universal ribosomal protein uS12 family. Part of the 30S ribosomal subunit. Contacts proteins S8 and S17. May interact with IF1 in the 30S initiation complex.

Functionally, with S4 and S5 plays an important role in translational accuracy. Interacts with and stabilizes bases of the 16S rRNA that are involved in tRNA selection in the A site and with the mRNA backbone. Located at the interface of the 30S and 50S subunits, it traverses the body of the 30S subunit contacting proteins on the other side and probably holding the rRNA structure together. The combined cluster of proteins S8, S12 and S17 appears to hold together the shoulder and platform of the 30S subunit. The polypeptide is Small ribosomal subunit protein uS12 (Clostridium tetani (strain Massachusetts / E88)).